Here is a 357-residue protein sequence, read N- to C-terminus: Probable xyloglucan endotransglucosylase/hydrolase protein 29 (357 aa).

Residues 1 to 31 form the signal peptide; sequence MRDSIYLLWIDNRLVVIIMMVMMVSCRCVLG. Residues 32-232 form the GH16 domain; the sequence is LENINPIFFD…YTFSPFVSEF (201 aa). Glu-117 (nucleophile) is an active-site residue. Residue Glu-121 is the Proton donor of the active site. Residues Glu-121 and 134-136 contribute to the xyloglucan site; that span reads QTN. Asn-140 carries N-linked (GlcNAc...) asparagine glycosylation. Xyloglucan-binding positions include 144–148, 211–212, and Gly-216; these read NRGRE and SW. Asn-241 and Asn-262 each carry an N-linked (GlcNAc...) asparagine glycan. The cysteines at positions 299 and 312 are disulfide-linked. Arg-304 contributes to the xyloglucan binding site. The tract at residues 326-357 is disordered; the sequence is GRLKFGGSHPKVHKARKKRRRNRSTPVVSADL. The segment covering 335–348 has biased composition (basic residues); the sequence is PKVHKARKKRRRNR. Asn-347 is a glycosylation site (N-linked (GlcNAc...) asparagine).

The protein belongs to the glycosyl hydrolase 16 family. XTH group 3 subfamily. Post-translationally, contains at least one intrachain disulfide bond essential for its enzymatic activity.

It localises to the secreted. It is found in the cell wall. The protein localises to the extracellular space. The protein resides in the apoplast. The catalysed reaction is breaks a beta-(1-&gt;4) bond in the backbone of a xyloglucan and transfers the xyloglucanyl segment on to O-4 of the non-reducing terminal glucose residue of an acceptor, which can be a xyloglucan or an oligosaccharide of xyloglucan.. Its function is as follows. Catalyzes xyloglucan endohydrolysis (XEH) and/or endotransglycosylation (XET). Cleaves and religates xyloglucan polymers, an essential constituent of the primary cell wall, and thereby participates in cell wall construction of growing tissues. This is Probable xyloglucan endotransglucosylase/hydrolase protein 29 (XTH29) from Arabidopsis thaliana (Mouse-ear cress).